Consider the following 176-residue polypeptide: Nucleoside triphosphate/diphosphate phosphatase (176 aa).

The Proton donor role is filled by Arg23. Asn87, Asp103, Asp105, Asp107, Asp120, and Glu123 together coordinate Mg(2+).

This sequence belongs to the Ntdp family. Mg(2+) serves as cofactor.

The enzyme catalyses a ribonucleoside 5'-triphosphate + H2O = a ribonucleoside 5'-diphosphate + phosphate + H(+). It carries out the reaction a ribonucleoside 5'-diphosphate + H2O = a ribonucleoside 5'-phosphate + phosphate + H(+). Its function is as follows. Has nucleoside phosphatase activity towards nucleoside triphosphates and nucleoside diphosphates. The protein is Nucleoside triphosphate/diphosphate phosphatase (ygaC) of Bacillus subtilis (strain 168).